We begin with the raw amino-acid sequence, 284 residues long: Bifunctional protein FolD (284 aa).

NADP(+) contacts are provided by residues 166–168 and Ile232; that span reads GAS.

The protein belongs to the tetrahydrofolate dehydrogenase/cyclohydrolase family. Homodimer.

It carries out the reaction (6R)-5,10-methylene-5,6,7,8-tetrahydrofolate + NADP(+) = (6R)-5,10-methenyltetrahydrofolate + NADPH. It catalyses the reaction (6R)-5,10-methenyltetrahydrofolate + H2O = (6R)-10-formyltetrahydrofolate + H(+). Its pathway is one-carbon metabolism; tetrahydrofolate interconversion. In terms of biological role, catalyzes the oxidation of 5,10-methylenetetrahydrofolate to 5,10-methenyltetrahydrofolate and then the hydrolysis of 5,10-methenyltetrahydrofolate to 10-formyltetrahydrofolate. This chain is Bifunctional protein FolD, found in Pseudoalteromonas translucida (strain TAC 125).